A 610-amino-acid chain; its full sequence is MSYDPKKIDLFPTLPGVYLMKNEEGEVLYVGKAKNLRQRVKQYFVPGRDGRLMIPYLVAKINYIETIVVTSEKEALLLENNLIKQHKPRYNALLKDDKSYIALKISQNDAWATVRLVRYKGTPEPDGLYFGPYTSAQAARQTLDLLNRLFPLRQCSDQEFARRTRPCLLYQMKRCVGPCTQKCTKGEYQQHLDRTIKFLRGQNKDVLKDLYEEMRLLSEQLEFEKANHLLRTIRYIEKTIESQYVDRPLGHDADAIGLFRYGEHVVVVLMIFRGGKLVGSRHFEFDNIIEEDHELLTSFLLQHYEGATEIPSEILLPSKISDEHPVEEILSARREQKVNLQIPQRGEKKALIEIAQKNAEALFKTQKDEATLREKTLLEMQELLFLTNYPTRIECFDNSNIAGSEPVSSMVAFTDGLKDSKRYRTYRLKIGSKPDDYAAMYEVLTRRYKRAKEENDMPDLVVVDGGKGQLNIAIKVFEELNITGVDLLGLAKEAGRHDKGMTAEQVFTCYQKEPILLKANSPILFLLQKIRDEAHRVAISFHRKRRSKKTLKSALDDIPGIGPAKRKTLLTHFGSLKKIELAADAELREVKGISAANIEAIRTFFQGRKE.

Positions 13 to 92 constitute a GIY-YIG domain; the sequence is TLPGVYLMKN…IKQHKPRYNA (80 aa). Residues 204-239 enclose the UVR domain; it reads KDVLKDLYEEMRLLSEQLEFEKANHLLRTIRYIEKT.

Belongs to the UvrC family. Interacts with UvrB in an incision complex.

The protein localises to the cytoplasm. In terms of biological role, the UvrABC repair system catalyzes the recognition and processing of DNA lesions. UvrC both incises the 5' and 3' sides of the lesion. The N-terminal half is responsible for the 3' incision and the C-terminal half is responsible for the 5' incision. In Protochlamydia amoebophila (strain UWE25), this protein is UvrABC system protein C.